The chain runs to 813 residues: Origin of replication complex subunit 1B (813 aa).

Residues 1–109 (MASTPRAKTF…TPKKKKKIDS (109 aa)) form a disordered region. The span at 11–21 (KSPTKTPSNIY) shows a compositional bias: polar residues. A compositionally biased stretch (low complexity) spans 27–41 (SPSSTSHTPQTPETH). Basic residues predominate over residues 43-52 (PLRRSARHVS). The Nuclear localization signal motif lies at 83–90 (PRKPTTDV). Residues 163–187 (DPEIEDCQICFKSDTNIMIECDDCL) form a histone H3 binding region. A PHD-type zinc finger spans residues 166–215 (IEDCQICFKSDTNIMIECDDCLGGFHLKCLKPPLKEVPEGDWICQFCEVK). C169, C172, C183, C186, H191, and C194 together coordinate Zn(2+). The segment at 203-207 (PEGDW) is histone H3 binding. Positions 209 and 212 each coordinate Zn(2+). The BAH domain maps to 226-344 (PKPPEGKKLA…VHWRSFKRLA (119 aa)). The histone H3 binding stretch occupies residues 319 to 324 (ASNDGD). The tract at residues 349-372 (GDSDSDQEWNGRKEEEVDDSDEEM) is disordered. Residues 436–803 (PKSLPCRSKE…DDVAFALKDN (368 aa)) form a necessary and sufficient for ORC complex assembly region. An ATP-binding site is contributed by 471-479 (GVPGTGKTI). Mg(2+)-binding residues include D561 and E562. Positions 562, 595, and 660 each coordinate ATP.

Belongs to the ORC1 family. As to quaternary structure, component of the origin recognition complex (ORC) composed of at least ORC1 (ORC1A or ORC1B), ORC2, ORC3, ORC4, ORC5 and ORC6. ORC is regulated in a cell-cycle and development dependent manner. It is sequentially assembled at the exit from anaphase of mitosis and disassembled as cells enter S phase. Interacts directly with ORC2 and ORC5. Binds mostly unmodified histone H3, and, with lower efficiency, H3K4me1 H3K4me2 and H3K4me3. In terms of tissue distribution, follow a cell-cycle regulation with a peak at the G1/S-phase. Mostly expressed in flower buds, and, to a lower exent, in roots, leaves and stems.

Its subcellular location is the nucleus. Its function is as follows. Essential protein required for ovules fertilization. Component of the origin recognition complex (ORC) that binds origins of replication. It has a role in both chromosomal replication and mating type transcriptional silencing. Binds to the ARS consensus sequence (ACS) of origins of replication. H3K4me3 effector that positively regulates the transcription of a subset of genes. This is Origin of replication complex subunit 1B from Arabidopsis thaliana (Mouse-ear cress).